Here is a 184-residue protein sequence, read N- to C-terminus: Glutathione-regulated potassium-efflux system ancillary protein KefG (184 aa).

This sequence belongs to the NAD(P)H dehydrogenase (quinone) family. KefG subfamily. As to quaternary structure, interacts with KefB.

The protein localises to the cell inner membrane. The enzyme catalyses a quinone + NADH + H(+) = a quinol + NAD(+). The catalysed reaction is a quinone + NADPH + H(+) = a quinol + NADP(+). Its function is as follows. Regulatory subunit of a potassium efflux system that confers protection against electrophiles. Required for full activity of KefB. The polypeptide is Glutathione-regulated potassium-efflux system ancillary protein KefG (Escherichia coli O1:K1 / APEC).